Here is a 304-residue protein sequence, read N- to C-terminus: Probable 5-dehydro-4-deoxyglucarate dehydratase (304 aa).

This sequence belongs to the DapA family.

It carries out the reaction 5-dehydro-4-deoxy-D-glucarate + H(+) = 2,5-dioxopentanoate + CO2 + H2O. It functions in the pathway carbohydrate acid metabolism; D-glucarate degradation; 2,5-dioxopentanoate from D-glucarate: step 2/2. In Pseudarthrobacter chlorophenolicus (strain ATCC 700700 / DSM 12829 / CIP 107037 / JCM 12360 / KCTC 9906 / NCIMB 13794 / A6) (Arthrobacter chlorophenolicus), this protein is Probable 5-dehydro-4-deoxyglucarate dehydratase.